The following is a 265-amino-acid chain: Cell division protein DivIB (265 aa).

Residues 1-33 are Cytoplasmic-facing; it reads MRMELKMMGNVNKSNKTNEYILRRHKKKRKKKL. Residues 34–54 form a helical membrane-spanning segment; sequence IIFSILLISILVTLCFKHPFF. The 69-residue stretch at 54 to 122 folds into the POTRA domain; sequence FNVKIVEVKD…NKIVIHIKER (69 aa). The Extracellular portion of the chain corresponds to 55-265; that stretch reads NVKIVEVKDN…FKGNPVVFIK (211 aa).

This sequence belongs to the FtsQ/DivIB family. DivIB subfamily.

The protein localises to the cell membrane. Its function is as follows. Cell division protein that may be involved in stabilizing or promoting the assembly of the division complex. This chain is Cell division protein DivIB, found in Clostridium tetani (strain Massachusetts / E88).